An 84-amino-acid polypeptide reads, in one-letter code: Hydramacin-1 (84 aa).

Residues 1–24 (MRTVVFFILVSIFLVALKPTGTQA) form the signal peptide. Residue glutamine 25 is modified to Pyrrolidone carboxylic acid. 4 disulfide bridges follow: cysteine 29-cysteine 72, cysteine 36-cysteine 65, cysteine 51-cysteine 81, and cysteine 55-cysteine 83.

Expressed in the endodermal epithelium.

It is found in the secreted. Its subcellular location is the target cell membrane. Its function is as follows. Cationic antimicrobial peptide potently active against Gram-positive and Gram-negative bacteria including multi-resistant human pathogenic strains. Is not active against the Gram-positive Coccus species, Gram-negative non-fermentation species and against the fungus C.albicans. It leads to aggregation of bacteria as an initial step of its bactericidal mechanism. Aggregated cells are connected via electron-dense contacts and adopt a thorn apple-like morphology. Hydramycin contains a belt of positively charged residues that separate two hydrophobic areas. This structure may explain the observed aggregation of bacteria, since each of these areas can immerse into the outer leaflets of the membranes of two individual bacteria. Is able to permeabilize membranes of viable bacteria at low and neutral pH values, but no pore-forming activity is not detected. The protein is Hydramacin-1 of Hydra vulgaris (Hydra).